The sequence spans 156 residues: 17.4 kDa class I heat shock protein (156 aa).

The sHSP domain occupies 42-156; sequence DVAAFTNAKV…PEVKSVDISG (115 aa).

It belongs to the small heat shock protein (HSP20) family. In terms of assembly, may form oligomeric structures. Binds to AKR2A.

The protein resides in the cytoplasm. This chain is 17.4 kDa class I heat shock protein (HSP17.4A), found in Arabidopsis thaliana (Mouse-ear cress).